We begin with the raw amino-acid sequence, 115 residues long: NADH-ubiquinone oxidoreductase chain 3 (115 aa).

Met1 is subject to N-formylmethionine. The next 3 membrane-spanning stretches (helical) occupy residues 3-23 (LMLA…IAFW), 55-75 (FFLV…LLPL), and 84-104 (LNTM…SLAY).

Core subunit of respiratory chain NADH dehydrogenase (Complex I) which is composed of 45 different subunits. Interacts with TMEM186. Interacts with TMEM242.

The protein resides in the mitochondrion inner membrane. It carries out the reaction a ubiquinone + NADH + 5 H(+)(in) = a ubiquinol + NAD(+) + 4 H(+)(out). In terms of biological role, core subunit of the mitochondrial membrane respiratory chain NADH dehydrogenase (Complex I) which catalyzes electron transfer from NADH through the respiratory chain, using ubiquinone as an electron acceptor. Essential for the catalytic activity of complex I. In Bos taurus (Bovine), this protein is NADH-ubiquinone oxidoreductase chain 3.